We begin with the raw amino-acid sequence, 625 residues long: Glutamine--fructose-6-phosphate aminotransferase [isomerizing] (625 aa).

Cys-2 serves as the catalytic Nucleophile; for GATase activity. Residues 2–229 (CGLVGYVGQR…QDQAVVITAD (228 aa)) form the Glutamine amidotransferase type-2 domain. 2 consecutive SIS domains span residues 298 to 437 (SDQE…ARGT) and 470 to 615 (LAYR…VDKP). Lys-620 (for Fru-6P isomerization activity) is an active-site residue.

As to quaternary structure, homodimer.

It localises to the cytoplasm. The enzyme catalyses D-fructose 6-phosphate + L-glutamine = D-glucosamine 6-phosphate + L-glutamate. Catalyzes the first step in hexosamine metabolism, converting fructose-6P into glucosamine-6P using glutamine as a nitrogen source. The sequence is that of Glutamine--fructose-6-phosphate aminotransferase [isomerizing] from Mycobacterium leprae (strain TN).